The sequence spans 93 residues: Phosphocarrier protein HPr (93 aa).

The 88-residue stretch at 2 to 89 (AERRVNVGWA…KLVAEGLEEL (88 aa)) folds into the HPr domain. The active-site Pros-phosphohistidine intermediate is the histidine 15.

It belongs to the HPr family.

The protein resides in the cytoplasm. In terms of biological role, general (non sugar-specific) component of the phosphoenolpyruvate-dependent sugar phosphotransferase system (sugar PTS). This major carbohydrate active-transport system catalyzes the phosphorylation of incoming sugar substrates concomitantly with their translocation across the cell membrane. The phosphoryl group from phosphoenolpyruvate (PEP) is transferred to the phosphoryl carrier protein HPr by enzyme I. Phospho-HPr then transfers it to the PTS EIIA domain. The sequence is that of Phosphocarrier protein HPr (ptsH) from Streptomyces coelicolor (strain ATCC BAA-471 / A3(2) / M145).